Reading from the N-terminus, the 449-residue chain is Chromosomal replication initiator protein DnaA (449 aa).

The interval 1-69 is domain I, interacts with DnaA modulators; it reads MEKVWLEAQS…VEAISSLTSV (69 aa). The tract at residues 69–112 is domain II; that stretch reads VKYQIEFKITEKIPLESKPVDNFTPVIKDNEPSKETNKNIDITA. The tract at residues 113–329 is domain III, AAA+ region; the sequence is NLNPKYTFDS…GMLIRLGAYA (217 aa). ATP-binding residues include Gly157, Gly159, Lys160, and Thr161. Residues 330–449 are domain IV, binds dsDNA; that stretch reads SLTGSEITLN…VENLKKELIT (120 aa).

Belongs to the DnaA family. In terms of assembly, oligomerizes as a right-handed, spiral filament on DNA at oriC.

Its subcellular location is the cytoplasm. Functionally, plays an essential role in the initiation and regulation of chromosomal replication. ATP-DnaA binds to the origin of replication (oriC) to initiate formation of the DNA replication initiation complex once per cell cycle. Binds the DnaA box (a 9 base pair repeat at the origin) and separates the double-stranded (ds)DNA. Forms a right-handed helical filament on oriC DNA; dsDNA binds to the exterior of the filament while single-stranded (ss)DNA is stabiized in the filament's interior. The ATP-DnaA-oriC complex binds and stabilizes one strand of the AT-rich DNA unwinding element (DUE), permitting loading of DNA polymerase. After initiation quickly degrades to an ADP-DnaA complex that is not apt for DNA replication. Binds acidic phospholipids. The chain is Chromosomal replication initiator protein DnaA from Geotalea uraniireducens (strain Rf4) (Geobacter uraniireducens).